A 130-amino-acid polypeptide reads, in one-letter code: uncharacterized protein (130 aa).

This is an uncharacterized protein from Bacillus subtilis (strain 168).